The chain runs to 207 residues: Infectivity protein P11 (207 aa).

A helical transmembrane segment spans residues 13 to 28; it reads WWIVAAIGGLAAFLLL. The stretch at 64-95 forms a coiled coil; that stretch reads AALQANTQLSAQNAQLQAQMDASRLQLETQLN.

It localises to the virion membrane. Functionally, component of the phage ejection machinery. Pilot protein for the formation of the tube that conducts the genome into the target cell. Probably involved in penetration of the bacterial outer membrane and for making the peptidoglycan layer accessible to the viral transglycosylase. Essential for viral infectivity. This chain is Infectivity protein P11 (XI), found in Enterobacteria phage PRD1 (Bacteriophage PRD1).